We begin with the raw amino-acid sequence, 332 residues long: 2,3-diketo-L-gulonate reductase (332 aa).

H44 serves as the catalytic Proton donor. Residues 168–174 (ITMVDMS), 224–225 (WK), and 304–306 (GHE) contribute to the NAD(+) site.

Belongs to the LDH2/MDH2 oxidoreductase family. DlgD subfamily. Homodimer.

Its subcellular location is the cytoplasm. It carries out the reaction 3-dehydro-L-gulonate + NAD(+) = 2,3-dioxo-L-gulonate + NADH + H(+). The enzyme catalyses 3-dehydro-L-gulonate + NADP(+) = 2,3-dioxo-L-gulonate + NADPH + H(+). Catalyzes the reduction of 2,3-diketo-L-gulonate in the presence of NADH, to form 3-keto-L-gulonate. This Klebsiella oxytoca protein is 2,3-diketo-L-gulonate reductase.